Reading from the N-terminus, the 81-residue chain is Large ribosomal subunit protein bL27 (81 aa).

The span at 1–11 (MATSKSGGSSK) shows a compositional bias: polar residues. Residues 1-24 (MATSKSGGSSKNGRDSISKRLGVK) form a disordered region.

It belongs to the bacterial ribosomal protein bL27 family.

This is Large ribosomal subunit protein bL27 from Borrelia duttonii (strain Ly).